Reading from the N-terminus, the 418-residue chain is Type II methyltransferase M.MspI (418 aa).

The region spanning 105–404 (FKFIDLFSGI…EQISLALKTV (300 aa)) is the SAM-dependent MTase C5-type domain. Residue Cys-174 is part of the active site.

This sequence belongs to the class I-like SAM-binding methyltransferase superfamily. C5-methyltransferase family.

The enzyme catalyses a 2'-deoxycytidine in DNA + S-adenosyl-L-methionine = a 5-methyl-2'-deoxycytidine in DNA + S-adenosyl-L-homocysteine + H(+). In terms of biological role, a methylase, recognizes the double-stranded sequence 5'-CCGG-3', methylates C-1 on both strands, and protects the DNA from cleavage by the MspI endonuclease. This chain is Type II methyltransferase M.MspI (mspIM), found in Moraxella sp.